A 197-amino-acid polypeptide reads, in one-letter code: Large ribosomal subunit protein uL13B (197 aa).

S193 is subject to Phosphoserine.

It belongs to the universal ribosomal protein uL13 family. In terms of assembly, component of the large ribosomal subunit (LSU). Mature yeast ribosomes consist of a small (40S) and a large (60S) subunit. The 40S small subunit contains 1 molecule of ribosomal RNA (18S rRNA) and at least 33 different proteins. The large 60S subunit contains 3 rRNA molecules (25S, 5.8S and 5S rRNA) and at least 46 different proteins.

The protein localises to the cytoplasm. Functionally, component of the ribosome, a large ribonucleoprotein complex responsible for the synthesis of proteins in the cell. The small ribosomal subunit (SSU) binds messenger RNAs (mRNAs) and translates the encoded message by selecting cognate aminoacyl-transfer RNA (tRNA) molecules. The large subunit (LSU) contains the ribosomal catalytic site termed the peptidyl transferase center (PTC), which catalyzes the formation of peptide bonds, thereby polymerizing the amino acids delivered by tRNAs into a polypeptide chain. The nascent polypeptides leave the ribosome through a tunnel in the LSU and interact with protein factors that function in enzymatic processing, targeting, and the membrane insertion of nascent chains at the exit of the ribosomal tunnel. This is Large ribosomal subunit protein uL13B (rpl1601) from Schizosaccharomyces pombe (strain 972 / ATCC 24843) (Fission yeast).